Here is a 430-residue protein sequence, read N- to C-terminus: Asparagine--tRNA ligase (430 aa).

It belongs to the class-II aminoacyl-tRNA synthetase family. Homodimer.

It localises to the cytoplasm. It catalyses the reaction tRNA(Asn) + L-asparagine + ATP = L-asparaginyl-tRNA(Asn) + AMP + diphosphate + H(+). The protein is Asparagine--tRNA ligase of Listeria monocytogenes serovar 1/2a (strain ATCC BAA-679 / EGD-e).